Reading from the N-terminus, the 26-residue chain is M-poneritoxin-Ng1d (26 aa).

As to expression, expressed by the venom gland.

The protein localises to the secreted. It is found in the target cell membrane. Functionally, has a broad spectrum of activity against both Gram-positive and Gram-negative bacteria and S.cerevisiae. Has insecticidal and hemolytic activities. May act by disrupting the integrity of the bacterial cell membrane. The chain is M-poneritoxin-Ng1d from Neoponera goeldii (Ponerine ant).